The sequence spans 276 residues: Undecaprenyl-diphosphatase 2 (276 aa).

Helical transmembrane passes span Ile-4–Leu-24, Asp-44–Phe-64, Ala-87–Leu-107, Leu-114–Trp-134, Leu-150–Phe-170, Phe-193–Leu-213, Leu-225–Met-245, and Leu-256–Val-276.

This sequence belongs to the UppP family.

It localises to the cell inner membrane. The catalysed reaction is di-trans,octa-cis-undecaprenyl diphosphate + H2O = di-trans,octa-cis-undecaprenyl phosphate + phosphate + H(+). Catalyzes the dephosphorylation of undecaprenyl diphosphate (UPP). Confers resistance to bacitracin. This Chromobacterium violaceum (strain ATCC 12472 / DSM 30191 / JCM 1249 / CCUG 213 / NBRC 12614 / NCIMB 9131 / NCTC 9757 / MK) protein is Undecaprenyl-diphosphatase 2.